A 281-amino-acid polypeptide reads, in one-letter code: Ethylene-inducing xylanase 1 (281 aa).

A signal peptide spans 1-19 (MVSYKAFLITLAAVTRVLT). Asn23 carries N-linked (GlcNAc...) asparagine glycosylation. The GH11 domain maps to 32–220 (SGTPSSTGTS…SSGSSDITVG (189 aa)). Catalysis depends on Glu116, which acts as the Nucleophile. Glu207 acts as the Proton donor in catalysis. One can recognise a CBM1 domain in the interval 246-281 (TCGALYSQCGGTGFTGSQCCASGTCKYANSYYSQCL).

Belongs to the glycosyl hydrolase 11 (cellulase G) family.

The catalysed reaction is Endohydrolysis of (1-&gt;4)-beta-D-xylosidic linkages in xylans.. It participates in glycan degradation; xylan degradation. In terms of biological role, endo-1,4-beta-xylanase involved in the hydrolysis of xylan, a major structural heterogeneous polysaccharide found in plant biomass representing the second most abundant polysaccharide in the biosphere, after cellulose. May act as an elicitor of plant defense responses in certain plants but does not exhibit any cell death when transiently expressed in N.benthamiana. The chain is Ethylene-inducing xylanase 1 from Botryotinia fuckeliana (strain B05.10) (Noble rot fungus).